The following is a 150-amino-acid chain: Arginine repressor (150 aa).

This sequence belongs to the ArgR family.

Its subcellular location is the cytoplasm. The protein operates within amino-acid biosynthesis; L-arginine biosynthesis [regulation]. Regulates arginine biosynthesis genes. The chain is Arginine repressor from Desulforudis audaxviator (strain MP104C).